Reading from the N-terminus, the 231-residue chain is Sugar fermentation stimulation protein homolog (231 aa).

The protein belongs to the SfsA family.

The polypeptide is Sugar fermentation stimulation protein homolog (Geotalea uraniireducens (strain Rf4) (Geobacter uraniireducens)).